The sequence spans 554 residues: Carboxypeptidase Y homolog A (554 aa).

A signal peptide spans 1–17; it reads MRVAASTVLLGVASAAS. The propeptide occupies 18–137; that stretch reads FQQQTQHVLS…KLADFNLRVK (120 aa). Intrachain disulfides connect C191-C431, C325-C339, C349-C372, C356-C365, and C394-C401. N222 carries an N-linked (GlcNAc...) asparagine glycan. S278 is a catalytic residue. D470 is a catalytic residue. A glycan (N-linked (GlcNAc...) asparagine) is linked at N518. H529 is an active-site residue.

Belongs to the peptidase S10 family.

It localises to the vacuole. It catalyses the reaction Release of a C-terminal amino acid with broad specificity.. Its function is as follows. Vacuolar carboxypeptidase involved in degradation of small peptides. Digests preferentially peptides containing an aliphatic or hydrophobic residue in P1' position, as well as methionine, leucine or phenylalanine in P1 position of ester substrate. The polypeptide is Carboxypeptidase Y homolog A (CPYA) (Podospora anserina (strain S / ATCC MYA-4624 / DSM 980 / FGSC 10383) (Pleurage anserina)).